Here is a 410-residue protein sequence, read N- to C-terminus: Squalene synthase 1 (410 aa).

Glycine 2 is subject to N-acetylglycine. Helical transmembrane passes span 283 to 303 (SIFR…ALCY) and 387 to 407 (QPNS…FAYL).

Belongs to the phytoene/squalene synthase family. Mg(2+) serves as cofactor. It depends on Mn(2+) as a cofactor. Expressed in all tissues analyzed (seedlings, cotyledons, inflorescences, siliques, leaves, stems and roots). Highly expressed in roots and pollen.

It localises to the endoplasmic reticulum membrane. The catalysed reaction is 2 (2E,6E)-farnesyl diphosphate + NADPH + H(+) = squalene + 2 diphosphate + NADP(+). It catalyses the reaction 2 (2E,6E)-farnesyl diphosphate + NADH + H(+) = squalene + 2 diphosphate + NAD(+). It participates in terpene metabolism; lanosterol biosynthesis; lanosterol from farnesyl diphosphate: step 1/3. The chain is Squalene synthase 1 from Arabidopsis thaliana (Mouse-ear cress).